The primary structure comprises 139 residues: Large ribosomal subunit protein uL16c (139 aa).

Over residues 1–17 (MLSPKKTKFRKQHRGRM) the composition is skewed to basic residues. The tract at residues 1–23 (MLSPKKTKFRKQHRGRMKGSASK) is disordered.

It belongs to the universal ribosomal protein uL16 family. As to quaternary structure, part of the 50S ribosomal subunit.

The protein resides in the plastid. It localises to the chloroplast. In Porphyra purpurea (Red seaweed), this protein is Large ribosomal subunit protein uL16c.